Here is a 183-residue protein sequence, read N- to C-terminus: Large ribosomal subunit protein uL6 (183 aa).

It belongs to the universal ribosomal protein uL6 family. As to quaternary structure, part of the 50S ribosomal subunit.

Its function is as follows. This protein binds to the 23S rRNA, and is important in its secondary structure. It is located near the subunit interface in the base of the L7/L12 stalk, and near the tRNA binding site of the peptidyltransferase center. The polypeptide is Large ribosomal subunit protein uL6 (Mycoplasmoides gallisepticum (strain R(low / passage 15 / clone 2)) (Mycoplasma gallisepticum)).